The chain runs to 720 residues: DNA replication licensing factor mcm7-A (720 aa).

The C4-type zinc-finger motif lies at 183-210 (CDQCGAETYQPIQSPTFMPLIMCPSREC). The MCM domain maps to 331 to 537 (FYEKLAASIA…NDLRLAQHIT (207 aa)). ATP-binding residues include Tyr344, Gly383, Ala385, Lys386, Ser387, Asn488, Arg513, and Arg603. An Arginine finger motif is present at residues 512 to 515 (SRFD).

This sequence belongs to the MCM family. As to quaternary structure, component of the mcm2-7 complex (RLF-M). The complex forms a toroidal hexameric ring with the proposed subunit order mcm2-mcm6-mcm4-mcm7-mcm3-mcm5. The heterodimer of mmcm3/mcm5 interacts with mcm4, mmcm6, mcm7 and weakly with mcm2. The N-terminus is required for interaction with mmcm3, though this interaction may not be direct, and remains in a complex with mmcm3 throughout the cell cycle. Begins to associate with zmcm6 at the neurula stage. Component of the replisome complex. Component of the CMG helicase complex, composed of the mcm2-7 complex, the GINS complex and cdc45. Post-translationally, ubiquitinated by traip when forks converge following formation of DNA interstrand cross-links. Ubiquitinated via 'Lys-6'- and 'Lys-63'-linked polyubiquitination by traip. Short ubiquitin chains on mcm7 promote recruitment of DNA glycosylase neil3. If the interstrand cross-link cannot be cleaved by neil3, the ubiquitin chains continue to grow on mcm7, promoting the unloading of the CMG helicase complex by the vcp/p97 ATPase.

The protein resides in the nucleus. Its subcellular location is the chromosome. The enzyme catalyses ATP + H2O = ADP + phosphate + H(+). Acts as a component of the mcm2-7 complex (mcm complex) which is the putative replicative helicase essential for 'once per cell cycle' DNA replication initiation and elongation in eukaryotic cells. The active ATPase sites in the mcm2-7 ring are formed through the interaction surfaces of two neighboring subunits such that a critical structure of a conserved arginine finger motif is provided in trans relative to the ATP-binding site of the Walker A box of the adjacent subunit. The six ATPase active sites, however, are likely to contribute differentially to the complex helicase activity. The existence of maternal and zygotic forms of mcm3 and mcm6 suggests that specific forms of mcm2-7 complexes may be used during different stages of development. The polypeptide is DNA replication licensing factor mcm7-A (mcm7-a) (Xenopus laevis (African clawed frog)).